The primary structure comprises 199 residues: MRFVLDTSIFVNPEIRRKFGDNPTEAMRTFLGYAEMLFGRVEFYMPPGIYREVMHFVDEDELLPEIELYIIKKPPNVHDIKIPAFVVYELIDDIRRRIDKGLRVAEKAVRESVIETDNVDRIIQKLRRNYRKALREGIVDSKEDFELILLAKELDATIVSADVGILTWAQKMGIKWIDAANFREVLEGLVAKMGEGKNL.

Belongs to the HARP family.

It carries out the reaction Endonucleolytic cleavage of RNA, removing 5'-extranucleotides from tRNA precursor.. In terms of biological role, RNA-free RNase P that catalyzes the removal of the 5'-leader sequence from pre-tRNA to produce the mature 5'-terminus. The protein is RNA-free ribonuclease P of Thermococcus onnurineus (strain NA1).